Reading from the N-terminus, the 148-residue chain is RING finger protein 24 (148 aa).

Residues 24–44 form a helical membrane-spanning segment; the sequence is IYIVVFGTAIFVFILSLLFCC. An RING-type zinc finger spans residues 78–119; it reads CAVCLEDFKPRDELGICPCKHAFHRKCLIKWLEVRKVCPLCN.

Interacts with TRPC1, TRPC3, TRPC4, TRPC5, TRPC6 and TRPC7.

It localises to the golgi apparatus membrane. May play a role in TRPCs intracellular trafficking. The polypeptide is RING finger protein 24 (RNF24) (Homo sapiens (Human)).